Consider the following 7524-residue polypeptide: Mucin-19 (7524 aa).

Positions 1 to 20 are cleaved as a signal peptide; it reads MKLILLYLAVVLCFVGKGAA. A disordered region spans residues 20–47; the sequence is ARSPTTTRTPTPSTSEKASHVPEATPTY. Residues 21–34 show a composition bias toward low complexity; sequence RSPTTTRTPTPSTS. Positions 55 to 225 constitute a VWFD 1 domain; sequence GEATMWGKDK…VCEDGVQYCD (171 aa). Residues cysteine 79 and cysteine 224 are joined by a disulfide bond. The region spanning 298 to 353 is the TIL domain; that stretch reads CPGKHIYKECGPSNPPTCSNVAPFQDSECVSGCTCPEGYLLDDIGEKGKCVLKEKC. VWFD domains lie at 392–568 and 851–1025; these read GICK…EGSP and STCH…QECS. Cystine bridges form between cysteine 394/cysteine 529, cysteine 434/cysteine 442, cysteine 853/cysteine 989, cysteine 875/cysteine 1024, cysteine 884/cysteine 986, and cysteine 900/cysteine 907. Over residues 1244–1261 the composition is skewed to low complexity; sequence AAATRASSSTSGSVETSV. Disordered stretches follow at residues 1244-7217 and 7249-7297; these read AAAT…SSLA and SVIK…CPDS. Residues 1262–1289 show a composition bias toward polar residues; that stretch reads PATTSTSKAQAHITTASSTETSALNSTA. Composition is skewed to low complexity over residues 1320–7099 and 7112–7217; these read PAVS…AGSG and STSG…SSLA. Repeat copies occupy residues 1321–1483, 1484–1646, 1647–1809, 1810–1972, 1973–2135, 2136–2298, 2299–2461, 2462–2624, 2625–2787, 2788–2950, 2951–3113, 3114–3276, 3277–3439, 3440–3602, 3603–3765, 3766–3928, 3929–4091, 4092–4254, 4255–4417, 4418–4580, 4581–4743, 4744–4906, 4907–5069, 5070–5232, 5233–5395, 5396–5558, 5559–5721, 5722–5884, 5885–6047, 6048–6210, 6211–6373, 6374–6536, 6537–6699, 6700–6862, 6863–7025, and 7026–7188. An approximate repeats region spans residues 1321-7188; that stretch reads AVSTTSAGST…AETAGSTTGP (5868 aa). The span at 7261–7291 shows a compositional bias: polar residues; that stretch reads AKSNETTGRTTSMPASTSVAPGVTTSPNISQ. 2 consecutive VWFC domains span residues 7302-7368 and 7370-7432; these read PVCH…GHCE and RTCL…YKCK. Intrachain disulfides connect cysteine 7435–cysteine 7482, cysteine 7449–cysteine 7496, cysteine 7458–cysteine 7512, and cysteine 7462–cysteine 7514. One can recognise a CTCK domain in the interval 7435–7519; sequence CRTTPVNVTV…TTCSCRDQCE (85 aa).

Specifically expressed in sublingual salivary glands. Expressed by mucous cells of the submandibular gland and submucosal gland of the trachea. Expression is altered in sld (sublingual gland differentiation arrest) mutants.

The protein resides in the secreted. In terms of biological role, may function in ocular mucus homeostasis. In Mus musculus (Mouse), this protein is Mucin-19 (Muc19).